A 2183-amino-acid chain; its full sequence is Genome polyprotein (2183 aa).

Residue glycine 2 is the site of N-myristoyl glycine; by host attachment. Residues 2-1493 are Cytoplasmic-facing; that stretch reads GAQVSTQKTG…HVSRAFICLQ (1492 aa). An amphipathic alpha-helix region spans residues 566–582; it reads FYQGPTEESVERAMGRV. Catalysis depends on for protease 2A activity residues histidine 870 and aspartate 888. The Zn(2+) site is built by cysteine 905 and cysteine 907. Cysteine 959 (for protease 2A activity) is an active-site residue. Zn(2+) contacts are provided by cysteine 965 and histidine 967. The interval 1099-1171 is membrane-binding; it reads NNGWLKKFTE…EQSAPSQSDQ (73 aa). Residues 1099 to 1237 are oligomerization; the sequence is NNGWLKKFTE…SPGAGKSVAT (139 aa). An RNA-binding region spans residues 1120 to 1124; the sequence is AVKIQ. The 157-residue stretch at 1203–1359 folds into the SF3 helicase domain; the sequence is EKKMSNYIQF…SMYSQNGKIN (157 aa). Residues cysteine 1367, cysteine 1379, and cysteine 1384 each coordinate Zn(2+). The C4-type; degenerate zinc finger occupies 1367–1384; sequence CDEECCPVNFKRCCPLVC. The RNA-binding stretch occupies residues 1411–1418; sequence EYNHRHSV. An oligomerization region spans residues 1422–1427; the sequence is LEALFQ. An intramembrane segment occupies 1494–1509; it reads ALTTFVSVAGIIYIIY. The Cytoplasmic segment spans residues 1510–2183; that stretch reads KLFAGFQGAY…TLRRKWLDSF (674 aa). The residue at position 1519 (tyrosine 1519) is an O-(5'-phospho-RNA)-tyrosine. Residues 1539–1717 enclose the Peptidase C3 domain; it reads GPAFEFAVAM…FSAGLLKHYF (179 aa). Residues histidine 1578, glutamate 1609, and cysteine 1685 each act as for protease 3C activity in the active site. Residues 1948 to 2064 form the RdRp catalytic domain; the sequence is GHLIAFDYSG…SYPWPIDASL (117 aa). Mg(2+)-binding residues include aspartate 1954 and aspartate 2050.

This sequence belongs to the picornaviruses polyprotein family. In terms of assembly, interacts with capsid protein VP1 and capsid protein VP3 to form heterotrimeric protomers. As to quaternary structure, interacts with capsid protein VP0, and capsid protein VP3 to form heterotrimeric protomers. Five protomers subsequently associate to form pentamers which serve as building blocks for the capsid. Interacts with capsid protein VP2, capsid protein VP3 and capsid protein VP4 following cleavage of capsid protein VP0. Interacts with host CXADR. Interacts with capsid protein VP1 and capsid protein VP3 in the mature capsid. In terms of assembly, interacts with capsid protein VP0 and capsid protein VP1 to form heterotrimeric protomers. Five protomers subsequently associate to form pentamers which serve as building blocks for the capsid. Interacts with capsid protein VP4 in the mature capsid. Interacts with protein 2C; this interaction may be important for virion morphogenesis. As to quaternary structure, interacts with capsid protein VP1 and capsid protein VP3. Homodimer. In terms of assembly, homohexamer; forms a hexameric ring structure with 6-fold symmetry characteristic of AAA+ ATPases. Interacts (via N-terminus) with host RTN3 (via reticulon domain); this interaction is important for viral replication. Interacts with capsid protein VP3; this interaction may be important for virion morphogenesis. As to quaternary structure, interacts with protein 3CD. Homodimer. Interacts with host GBF1. Interacts (via GOLD domain) with host ACBD3 (via GOLD domain); this interaction allows the formation of a viral protein 3A/ACBD3 heterotetramer with a 2:2 stoichiometry, which will stimulate the recruitment of host PI4KB in order to synthesize PI4P at the viral RNA replication sites. In terms of assembly, interacts with RNA-directed RNA polymerase. As to quaternary structure, interacts with protein 3AB and with RNA-directed RNA polymerase. Interacts with Viral protein genome-linked and with protein 3CD. Mg(2+) is required as a cofactor. Post-translationally, specific enzymatic cleavages in vivo by the viral proteases yield processing intermediates and the mature proteins. In terms of processing, myristoylation is required for the formation of pentamers during virus assembly. Further assembly of 12 pentamers and a molecule of genomic RNA generates the provirion. During virion maturation, immature virions are rendered infectious following cleavage of VP0 into VP4 and VP2. This maturation seems to be an autocatalytic event triggered by the presence of RNA in the capsid and it is followed by a conformational change infectious virion. Post-translationally, myristoylation is required during RNA encapsidation and formation of the mature virus particle. In terms of processing, VPg is uridylylated by the polymerase into VPg-pUpU. This acts as a nucleotide-peptide primer for the genomic RNA replication.

The protein localises to the virion. It is found in the host cytoplasm. Its subcellular location is the host cytoplasmic vesicle membrane. It localises to the host nucleus. The enzyme catalyses a ribonucleoside 5'-triphosphate + H2O = a ribonucleoside 5'-diphosphate + phosphate + H(+). The catalysed reaction is Selective cleavage of Tyr-|-Gly bond in the picornavirus polyprotein.. It catalyses the reaction RNA(n) + a ribonucleoside 5'-triphosphate = RNA(n+1) + diphosphate. It carries out the reaction Selective cleavage of Gln-|-Gly bond in the poliovirus polyprotein. In other picornavirus reactions Glu may be substituted for Gln, and Ser or Thr for Gly.. Its activity is regulated as follows. Replication or transcription is subject to high level of random mutations by the nucleotide analog ribavirin. Forms an icosahedral capsid of pseudo T=3 symmetry with capsid proteins VP2 and VP3. The capsid is 300 Angstroms in diameter, composed of 60 copies of each capsid protein and enclosing the viral positive strand RNA genome. Capsid protein VP1 mainly forms the vertices of the capsid. Capsid protein VP1 interacts with host CXADR to provide virion attachment to target host cells. This attachment induces virion internalization. Tyrosine kinases are probably involved in the entry process. After binding to its receptor, the capsid undergoes conformational changes. Capsid protein VP1 N-terminus (that contains an amphipathic alpha-helix) and capsid protein VP4 are externalized. Together, they shape a pore in the host membrane through which viral genome is translocated to host cell cytoplasm. Functionally, forms an icosahedral capsid of pseudo T=3 symmetry with capsid proteins VP2 and VP3. The capsid is 300 Angstroms in diameter, composed of 60 copies of each capsid protein and enclosing the viral positive strand RNA genome. In terms of biological role, lies on the inner surface of the capsid shell. After binding to the host receptor, the capsid undergoes conformational changes. Capsid protein VP4 is released, Capsid protein VP1 N-terminus is externalized, and together, they shape a pore in the host membrane through which the viral genome is translocated into the host cell cytoplasm. Its function is as follows. Component of immature procapsids, which is cleaved into capsid proteins VP4 and VP2 after maturation. Allows the capsid to remain inactive before the maturation step. Cysteine protease that cleaves viral polyprotein and specific host proteins. It is responsible for the autocatalytic cleavage between the P1 and P2 regions, which is the first cleavage occurring in the polyprotein. Also cleaves the host translation initiation factor EIF4G1, in order to shut down the capped cellular mRNA translation. Inhibits the host nucleus-cytoplasm protein and RNA trafficking by cleaving host members of the nuclear pores. Counteracts stress granule formation probably by antagonizing its assembly or promoting its dissassembly. Cleaves and inhibits host IFIH1/MDA5, thereby inhibiting the type-I IFN production and the establishment of the antiviral state. Cleaves and inhibits host MAVS, thereby inhibiting the type-I IFN production and the establishment of the antiviral state. Functionally, plays an essential role in the virus replication cycle by acting as a viroporin. Creates a pore in the host endoplasmic reticulum and as a consequence releases Ca2+ in the cytoplasm of infected cell. In turn, high levels of cytoplasmic calcium may trigger membrane trafficking and transport of viral ER-associated proteins to viroplasms, sites of viral genome replication. In terms of biological role, induces and associates with structural rearrangements of intracellular membranes. Displays RNA-binding, nucleotide binding and NTPase activities. May play a role in virion morphogenesis and viral RNA encapsidation by interacting with the capsid protein VP3. Its function is as follows. Localizes the viral replication complex to the surface of membranous vesicles. Together with protein 3CD binds the Cis-Active RNA Element (CRE) which is involved in RNA synthesis initiation. Acts as a cofactor to stimulate the activity of 3D polymerase, maybe through a nucleid acid chaperone activity. Localizes the viral replication complex to the surface of membranous vesicles. It inhibits host cell endoplasmic reticulum-to-Golgi apparatus transport and causes the disassembly of the Golgi complex, possibly through GBF1 interaction. This would result in depletion of MHC, trail receptors and IFN receptors at the host cell surface. Plays an essential role in viral RNA replication by recruiting ACBD3 and PI4KB at the viral replication sites, thereby allowing the formation of the rearranged membranous structures where viral replication takes place. Functionally, acts as a primer for viral RNA replication and remains covalently bound to viral genomic RNA. VPg is uridylylated prior to priming replication into VPg-pUpU. The oriI viral genomic sequence may act as a template for this. The VPg-pUpU is then used as primer on the genomic RNA poly(A) by the RNA-dependent RNA polymerase to replicate the viral genome. During genome replication, the VPg-RNA linkage is removed by the host TDP2, thereby accelerating replication. During the late stage of the replication cycle, host TDP2 is excluded from sites of viral RNA synthesis and encapsidation, allowing for the generation of progeny virions. In terms of biological role, involved in the viral replication complex and viral polypeptide maturation. It exhibits protease activity with a specificity and catalytic efficiency that is different from protease 3C. Protein 3CD lacks polymerase activity. Protein 3CD binds to the 5'UTR of the viral genome. Its function is as follows. Replicates the viral genomic RNA on the surface of intracellular membranes. May form linear arrays of subunits that propagate along a strong head-to-tail interaction called interface-I. Covalently attaches UMP to a tyrosine of VPg, which is used to prime RNA synthesis. The positive stranded RNA genome is first replicated at virus induced membranous vesicles, creating a dsRNA genomic replication form. This dsRNA is then used as template to synthesize positive stranded RNA genomes. ss(+)RNA genomes are either translated, replicated or encapsidated. Major viral protease that mediates proteolytic processing of the polyprotein. Cleaves host EIF5B, contributing to host translation shutoff. Also cleaves host PABPC1, contributing to host translation shutoff. Cleaves host NLRP1, triggers host N-glycine-mediated degradation of the autoinhibitory NLRP1 N-terminal fragment. In Coxsackievirus B4 (strain JVB / Benschoten / New York/51), this protein is Genome polyprotein.